Here is a 266-residue protein sequence, read N- to C-terminus: Glucosamine-6-phosphate deaminase (266 aa).

The active-site Proton acceptor; for enolization step is aspartate 67. The For ring-opening step role is filled by asparagine 139. Histidine 141 acts as the Proton acceptor; for ring-opening step in catalysis. Glutamate 146 (for ring-opening step) is an active-site residue.

Belongs to the glucosamine/galactosamine-6-phosphate isomerase family. NagB subfamily. As to quaternary structure, homohexamer.

It carries out the reaction alpha-D-glucosamine 6-phosphate + H2O = beta-D-fructose 6-phosphate + NH4(+). Its pathway is amino-sugar metabolism; N-acetylneuraminate degradation; D-fructose 6-phosphate from N-acetylneuraminate: step 5/5. Catalyzes the reversible isomerization-deamination of glucosamine 6-phosphate (GlcN6P) to form fructose 6-phosphate (Fru6P) and ammonium ion. This is Glucosamine-6-phosphate deaminase from Marinomonas sp. (strain MWYL1).